A 689-amino-acid polypeptide reads, in one-letter code: Glycine--tRNA ligase beta subunit (689 aa).

It belongs to the class-II aminoacyl-tRNA synthetase family. Tetramer of two alpha and two beta subunits.

The protein localises to the cytoplasm. It catalyses the reaction tRNA(Gly) + glycine + ATP = glycyl-tRNA(Gly) + AMP + diphosphate. This is Glycine--tRNA ligase beta subunit from Escherichia coli O17:K52:H18 (strain UMN026 / ExPEC).